Reading from the N-terminus, the 350-residue chain is Alcohol dehydrogenase (350 aa).

Residue cysteine 46 participates in Zn(2+) binding. NAD(+)-binding residues include histidine 47, threonine 48, and histidine 51. Zn(2+)-binding residues include histidine 69, cysteine 100, cysteine 103, cysteine 106, cysteine 114, and cysteine 156. The NAD(+) site is built by glycine 183, glycine 184, leucine 185, and aspartate 204. Threonine 205 is subject to Phosphothreonine. The NAD(+) site is built by lysine 209 and phenylalanine 224. Threonine 250 is subject to Phosphothreonine. 5 residues coordinate NAD(+): valine 271, methionine 273, serine 296, valine 298, and arginine 343.

It belongs to the zinc-containing alcohol dehydrogenase family. In terms of assembly, homotetramer. Zn(2+) serves as cofactor.

It is found in the cytoplasm. It catalyses the reaction a primary alcohol + NAD(+) = an aldehyde + NADH + H(+). The catalysed reaction is a secondary alcohol + NAD(+) = a ketone + NADH + H(+). The enzyme catalyses ethanol + NAD(+) = acetaldehyde + NADH + H(+). Functionally, reduces acetaldehyde to ethanol during the fermentation of glucose. The sequence is that of Alcohol dehydrogenase (adh1) from Schizosaccharomyces pombe (strain 972 / ATCC 24843) (Fission yeast).